Consider the following 199-residue polypeptide: Probable GTP-binding protein EngB (199 aa).

In terms of domain architecture, EngB-type G spans 28-199; it reads DIPEIALAGR…QAWDAILEQI (172 aa). GTP is bound by residues 36–43, 63–67, 81–84, 148–151, and 180–182; these read GRSNVGKS, GKTQL, DVPG, TKAD, and FSS. Mg(2+)-binding residues include serine 43 and threonine 65.

This sequence belongs to the TRAFAC class TrmE-Era-EngA-EngB-Septin-like GTPase superfamily. EngB GTPase family. Mg(2+) serves as cofactor.

Functionally, necessary for normal cell division and for the maintenance of normal septation. This chain is Probable GTP-binding protein EngB, found in Streptococcus uberis (strain ATCC BAA-854 / 0140J).